The primary structure comprises 439 residues: Ribosomal protein uS12 methylthiotransferase RimO (439 aa).

The 113-residue stretch at 7–119 (KQLCLISLGC…IDIMIAKKQN (113 aa)) folds into the MTTase N-terminal domain. [4Fe-4S] cluster contacts are provided by cysteine 16, cysteine 50, cysteine 82, cysteine 151, cysteine 155, and cysteine 158. In terms of domain architecture, Radical SAM core spans 137 to 368 (TGSSVHAYVK…ALKHQNHSFK (232 aa)).

The protein belongs to the methylthiotransferase family. RimO subfamily. Requires [4Fe-4S] cluster as cofactor.

It localises to the cytoplasm. It carries out the reaction L-aspartate(89)-[ribosomal protein uS12]-hydrogen + (sulfur carrier)-SH + AH2 + 2 S-adenosyl-L-methionine = 3-methylsulfanyl-L-aspartate(89)-[ribosomal protein uS12]-hydrogen + (sulfur carrier)-H + 5'-deoxyadenosine + L-methionine + A + S-adenosyl-L-homocysteine + 2 H(+). Catalyzes the methylthiolation of an aspartic acid residue of ribosomal protein uS12. This Helicobacter pylori (strain G27) protein is Ribosomal protein uS12 methylthiotransferase RimO.